The following is a 261-amino-acid chain: Succinate dehydrogenase iron-sulfur subunit (261 aa).

The 2Fe-2S ferredoxin-type domain occupies 28-119 (RKVKVYRYDP…DIKIYPLPHM (92 aa)). Residues cysteine 80, cysteine 85, and cysteine 100 each coordinate [2Fe-2S] cluster. The 31-residue stretch at 161 to 191 (DREKLDGLYECILCACCSTSCPSYWWNGDKY) folds into the 4Fe-4S ferredoxin-type domain. [4Fe-4S] cluster-binding residues include cysteine 171, cysteine 174, and cysteine 177. [3Fe-4S] cluster is bound at residue cysteine 181. Residue tryptophan 186 coordinates a ubiquinone. [3Fe-4S] cluster-binding residues include cysteine 228 and cysteine 234. Position 238 (cysteine 238) interacts with [4Fe-4S] cluster.

Belongs to the succinate dehydrogenase/fumarate reductase iron-sulfur protein family. As to quaternary structure, part of an enzyme complex containing four subunits: a flavoprotein, an iron-sulfur, cytochrome b-556, and a hydrophobic anchor protein. [2Fe-2S] cluster is required as a cofactor. It depends on [3Fe-4S] cluster as a cofactor. [4Fe-4S] cluster serves as cofactor.

The enzyme catalyses a quinone + succinate = fumarate + a quinol. Its pathway is carbohydrate metabolism; tricarboxylic acid cycle; fumarate from succinate (bacterial route): step 1/1. In Rickettsia prowazekii (strain Madrid E), this protein is Succinate dehydrogenase iron-sulfur subunit (sdhB).